The sequence spans 1304 residues: Splicing factor 3B subunit 1 (1304 aa).

Disordered stretches follow at residues 100–119 and 124–148; these read QYDPFAEHRPPKIADREDEY and RTMIISPERLDPFADGGKTPDPKMN. Residues 104–119 show a composition bias toward basic and acidic residues; it reads FAEHRPPKIADREDEY. A Phosphothreonine modification is found at Thr125. At Ser129 the chain carries Phosphoserine. Lys141 carries the N6-acetyllysine modification. At Thr142 the chain carries Phosphothreonine. Arg157 bears the Citrulline mark. A disordered region spans residues 172–360; the sequence is LAEKAKAGEL…PVLTPGKTPI (189 aa). Position 194 is a phosphoserine (Ser194). Thr203, Thr207, and Thr211 each carry phosphothreonine. N6-acetyllysine; alternate is present on Lys214. Lys214 participates in a covalent cross-link: Glycyl lysine isopeptide (Lys-Gly) (interchain with G-Cter in SUMO2); alternate. A phosphothreonine mark is found at Thr223 and Thr227. The interval 223-491 is interaction with PPP1R8; that stretch reads TPGHTPSLRW…VDESTLSPEE (269 aa). A Phosphoserine modification is found at Ser229. Residues 231–241 are compositionally biased toward basic and acidic residues; that stretch reads RWDETPGRAKG. Residues Thr235, Thr244, Thr248, Thr257, Thr261, Thr267, Thr273, and Thr278 each carry the phosphothreonine modification. Ser287 is subject to Phosphoserine. The segment covering 291–304 has biased composition (basic and acidic residues); that stretch reads NRWDETPKTERDTP. Phosphothreonine occurs at positions 296, 299, 303, and 313. Position 322 is a phosphoserine (Ser322). Phosphothreonine is present on residues Thr326 and Thr328. A Phosphoserine modification is found at Ser332. Position 341 is a phosphothreonine (Thr341). The span at 342 to 352 shows a compositional bias: polar residues; it reads PASQMGGSTPV. Ser344 and Ser349 each carry phosphoserine. Phosphothreonine occurs at positions 350 and 354. At Ser400 the chain carries Phosphoserine. Residue Lys413 forms a Glycyl lysine isopeptide (Lys-Gly) (interchain with G-Cter in SUMO2); alternate linkage. A Glycyl lysine isopeptide (Lys-Gly) (interchain with G-Cter in SUMO1); alternate cross-link involves residue Lys413. Residue Thr426 is modified to Phosphothreonine. A Glycyl lysine isopeptide (Lys-Gly) (interchain with G-Cter in SUMO2) cross-link involves residue Lys430. Thr434 bears the Phosphothreonine; by DYRK1A mark. Thr436 carries the post-translational modification Phosphothreonine. At Ser488 the chain carries Phosphoserine. HEAT repeat units lie at residues 529-568, 569-603, 604-641, 643-677, 680-718, 763-801, 843-881, 1010-1048, 1052-1090, 1122-1160, and 1163-1201; these read GPLFNQILPLLMSPTLEDQERHLLVKVIDRILYKLDDLVR, PYVHKILVVIEPLLIDEDYYARVEGREIISNLAKA, AGLATMISTMRPDIDNMDEYVRNTTARAFAVVASALGI, SLLPFLKAVCKSKKSWQARHTGIKIVQQIAILMGC, LPHLRSLVEIIEHGLVDEQQKVRTISALAIAALAEAATP, NYYTREVMLILIREFQSPDEEMKKIVLKVVKQCCGTDGV, KVGAAEIISRIVDDLKDEAEQYRKMVMETIEKIMGNLGA, TPPIKDLLPRLTPILKNRHEKVQENCIDLVGRIADRGAE, AREWMRICFELLELLKAHKKAIRRATVNTFGYIAKAIGP, TCSPFTVLPALMNEYRVPELNVQNGVLKSLSFLFEYIGE, and KDYIYAVTPLLEDALMDRDLVHRQTASAVVQHMSLGVYG. Positions 547-550 are interaction with PHF5A; the sequence is QERH. Residues Lys554 and Lys562 each carry the N6-acetyllysine modification. Positions 1156–1157 are interaction with PHF5A; that stretch reads EY. The tract at residues 1248–1304 is interaction with SF3B3 and SF3B5; sequence QYCLQGLFHPARKVRDVYWKIYNSIYIGSQDALIAHYPRIYNDDKNTYIRYDLDYIL.

The protein belongs to the SF3B1 family. In terms of assembly, component of the 17S U2 SnRNP complex, a ribonucleoprotein complex that contains small nuclear RNA (snRNA) U2 and a number of specific proteins. Part of the SF3B subcomplex of the 17S U2 SnRNP complex. SF3B associates with the splicing subcomplex SF3A and a 12S RNA unit to form the U2 small nuclear ribonucleoproteins complex (U2 snRNP). Within the SF3B complex, interacts directly (via HEAT domain) with SF3B3, SF3B5, SF3B6 and (via HEAT domain) with PHF5A. The SF3B subcomplex interacts with U2AF2. Identified in the spliceosome C complex. Component of the minor (U12-type spliceosome) spliceosome. Within the minor spliceosome complex, interacts with SCNM1 and CRIPT. Component of the B-WICH complex, at least composed of SMARCA5/SNF2H, BAZ1B/WSTF, SF3B1, DEK, MYO1C, ERCC6, MYBBP1A and DDX21. Phosphorylated form interacts with PPP1R8. Interacts with PQBP1. Interacts with RBM17. Interacts with RBM39. Interacts with SETX. Interacts with RBM15. Interacts with USH1G. Interacts with SDE2. Interacts with U2AF1. Interacts with CACTIN. Interacts with ZRSR1. Interacts with CYREN. Phosphorylated. Phosphorylation occurs concomitantly with the splicing catalytic steps. Phosphorylation on Thr-244, Thr-248 and Thr-313 by cyclin-dependent kinases promotes interaction with PPP1R8 during mitosis. In terms of processing, citrullinated by PADI4. As to expression, ubiquitous.

It localises to the nucleus. The protein resides in the nucleus speckle. Component of the 17S U2 SnRNP complex of the spliceosome, a large ribonucleoprotein complex that removes introns from transcribed pre-mRNAs. The 17S U2 SnRNP complex (1) directly participates in early spliceosome assembly and (2) mediates recognition of the intron branch site during pre-mRNA splicing by promoting the selection of the pre-mRNA branch-site adenosine, the nucleophile for the first step of splicing. Within the 17S U2 SnRNP complex, SF3B1 is part of the SF3B subcomplex, which is required for 'A' complex assembly formed by the stable binding of U2 snRNP to the branchpoint sequence in pre-mRNA. Sequence independent binding of SF3A and SF3B subcomplexes upstream of the branch site is essential, it may anchor U2 snRNP to the pre-mRNA. May also be involved in the assembly of the 'E' complex. Also acts as a component of the minor spliceosome, which is involved in the splicing of U12-type introns in pre-mRNAs. Together with other U2 snRNP complex components may also play a role in the selective processing of microRNAs (miRNAs) from the long primary miRNA transcript, pri-miR-17-92. The protein is Splicing factor 3B subunit 1 of Mus musculus (Mouse).